The following is a 465-amino-acid chain: Histidine--tRNA ligase (465 aa).

It belongs to the class-II aminoacyl-tRNA synthetase family. As to quaternary structure, homodimer.

It localises to the cytoplasm. The enzyme catalyses tRNA(His) + L-histidine + ATP = L-histidyl-tRNA(His) + AMP + diphosphate + H(+). This Pelagibacter ubique (strain HTCC1062) protein is Histidine--tRNA ligase (hisS).